A 194-amino-acid polypeptide reads, in one-letter code: Holliday junction branch migration complex subunit RuvA (194 aa).

The domain I stretch occupies residues M1–L64. A domain II region spans residues S65–S140. The interval S140–K144 is flexible linker. A domain III region spans residues L145–C194.

The protein belongs to the RuvA family. In terms of assembly, homotetramer. Forms an RuvA(8)-RuvB(12)-Holliday junction (HJ) complex. HJ DNA is sandwiched between 2 RuvA tetramers; dsDNA enters through RuvA and exits via RuvB. An RuvB hexamer assembles on each DNA strand where it exits the tetramer. Each RuvB hexamer is contacted by two RuvA subunits (via domain III) on 2 adjacent RuvB subunits; this complex drives branch migration. In the full resolvosome a probable DNA-RuvA(4)-RuvB(12)-RuvC(2) complex forms which resolves the HJ.

The protein localises to the cytoplasm. In terms of biological role, the RuvA-RuvB-RuvC complex processes Holliday junction (HJ) DNA during genetic recombination and DNA repair, while the RuvA-RuvB complex plays an important role in the rescue of blocked DNA replication forks via replication fork reversal (RFR). RuvA specifically binds to HJ cruciform DNA, conferring on it an open structure. The RuvB hexamer acts as an ATP-dependent pump, pulling dsDNA into and through the RuvAB complex. HJ branch migration allows RuvC to scan DNA until it finds its consensus sequence, where it cleaves and resolves the cruciform DNA. The protein is Holliday junction branch migration complex subunit RuvA of Xylella fastidiosa (strain M12).